The primary structure comprises 984 residues: Lateral signaling target protein 2 homolog (984 aa).

Disordered regions lie at residues 308–462, 508–527, 539–642, and 749–900; these read PLGS…DTDE, YGTT…PSTS, RLRL…SSLS, and DNVF…SPPA. Composition is skewed to low complexity over residues 326-356, 369-380, 387-404, and 412-433; these read TTSS…TTST, NNHNSNSNSSTN, TLRS…TPTA, and PSHS…PADW. A compositionally biased stretch (acidic residues) spans 434 to 462; the sequence is SDGDDEDEDDDDIEVDEEDLESSDDDTDE. Phosphoserine is present on residues Ser544 and Ser545. Positions 571–611 are enriched in basic residues; that stretch reads RESHSHRHHQRHHHHHHHRHSHQHQHRQPHPHRTTRSGRKR. The segment covering 630–642 has biased composition (low complexity); the sequence is LASGDTSAASSLS. Polar residues-rich tracts occupy residues 760–779 and 789–806; these read ATGQ…TIDL and SGAT…SRSL. Phosphoserine is present on Ser805. Composition is skewed to low complexity over residues 811–869 and 886–899; these read AASS…PVSA and PSSA…LSPP. The FYVE-type zinc-finger motif lies at 904-964; it reads DGKAPRCMAC…VCRDCYVREV (61 aa). Residues Cys910, Cys913, Cys926, Cys929, Cys934, Cys937, Cys956, and Cys959 each coordinate Zn(2+).

The protein belongs to the lst-2 family.

Functionally, negative regulator of epidermal growth factor receptor (EGFR) signaling. In Drosophila yakuba (Fruit fly), this protein is Lateral signaling target protein 2 homolog.